Here is a 443-residue protein sequence, read N- to C-terminus: Omega-6 fatty acid desaturase, chloroplastic (443 aa).

The N-terminal 64 residues, 1–64, are a transit peptide targeting the chloroplast; the sequence is MASRIADSLF…AKKRIGCIKA (64 aa). The Histidine box-1 signature appears at 166–170; that stretch reads HDCAH. The Histidine box-2 signature appears at 202–206; it reads HDRHH. The Histidine box-3 motif lies at 362 to 366; that stretch reads HIPHH.

Belongs to the fatty acid desaturase type 1 family.

Its subcellular location is the plastid. The protein resides in the chloroplast membrane. The catalysed reaction is a (9Z)-octadecenoyl-containing glycerolipid + 2 reduced [2Fe-2S]-[ferredoxin] + O2 + 2 H(+) = a (9Z,12Z)-octadecadienoyl-containing glycerolipid + 2 oxidized [2Fe-2S]-[ferredoxin] + 2 H2O. It functions in the pathway lipid metabolism; polyunsaturated fatty acid biosynthesis. Chloroplast omega-6 fatty acid desaturase introduces the second double bond in the biosynthesis of 16:3 and 18:3 fatty acids, important constituents of plant membranes. It is thought to use ferredoxin as an electron donor and to act on fatty acids esterified to galactolipids, sulfolipids and phosphatidylglycerol. In Brassica napus (Rape), this protein is Omega-6 fatty acid desaturase, chloroplastic.